The following is a 269-amino-acid chain: Hydroxyethylthiazole kinase (269 aa).

Met-46 provides a ligand contact to substrate. The ATP site is built by Arg-122 and Thr-168. Gly-195 serves as a coordination point for substrate.

The protein belongs to the Thz kinase family. Mg(2+) is required as a cofactor.

The enzyme catalyses 5-(2-hydroxyethyl)-4-methylthiazole + ATP = 4-methyl-5-(2-phosphooxyethyl)-thiazole + ADP + H(+). It functions in the pathway cofactor biosynthesis; thiamine diphosphate biosynthesis; 4-methyl-5-(2-phosphoethyl)-thiazole from 5-(2-hydroxyethyl)-4-methylthiazole: step 1/1. Functionally, catalyzes the phosphorylation of the hydroxyl group of 4-methyl-5-beta-hydroxyethylthiazole (THZ). The polypeptide is Hydroxyethylthiazole kinase (Geobacillus thermodenitrificans (strain NG80-2)).